Consider the following 969-residue polypeptide: MEDYEEDLYGVEDDFQNQFAAELEVLAELEGTRDQAPPGTLQTPASRPPLTFEEAIAGGDTVPRPCPAGSPGNVNRNTRKNVRRDQPAPSSPMVKRPRLDVVKKLNFEPDMEELLYPDSPPGDITPPPSPEVFPEMLDAGYSDANADKDLMQTLPSPRNRNPVLRRPPILEDYINVTSTSGERAFLVLRADLIGPGVQNPLLDVHWRGCGQLDLLGVPFASLKEQVDSKRRQQLLEDAQQLSDTLHSLRSEGEEAVLEGPPAEEPAPGQNTAQHCLWVDEFAPQHYTELLSDDFTNRCLLKWLKLWDLVVFGRERPARKPRPGVETTRVGKEATAPGKWKSHEQALEEMLEAELDPSQRPRQKVALLCGPPGLGKTTLAHVVARHAGYCVVEMNASDDRSPEAFRTRIEAATQMESVLGVGGRPNCLVIDEIDGAPTAAINVLLGILNRKGPQEADQGGTAVAAGGRRRRAEGGLLTRPIICICNDQFTPSLRQLKQQALLLHVPPTLPSRLVQRLQEISLQHGMRSDPGALVALCEKTDNDIRACINTLQFLYGRGRRELSVKAVQTTHVGLKDQRKGLFSVWQEVFQLPRTQRRIVGQDLMLPAHALLLSNGDKGSLTLASQRFYHILRVTTSAGEHEKVVQGLFDNFLRLRLRDSSLSTVCCALDWLAFDDLLEQAAHRGQSFQLLCYLPFVPAAFHVLFASSHVPRITFPSSQQEAQTRMSQTRNHIQTLVSGMAPTTRSRATPQALVLDTLCLLLDVLAPKLRPVSTQLYSAHEKQQLSCLVGTMLAYSLTYHQERTPDGQYLYKLEPNVEEVCRFPELPARKPLTYQAKQLIAREIEMEKMRRAEALAWARSGPQVDQGSSGPASLWTDSGEKGTRQPAPRNHEQRLEHIMKRATVQEQPERDFFGRVVIRKVAVPSREVEAPQKDADEWRMGVAVGRSEVWFRFNEGVSNAVRRSLYIRDLL.

The disordered stretch occupies residues 30 to 97; that stretch reads EGTRDQAPPG…APSSPMVKRP (68 aa). Residue Thr-51 is modified to Phosphothreonine. Phosphoserine is present on Ser-221. Disordered stretches follow at residues 250–269 and 318–340; these read SEGE…APGQ and RKPR…GKWK. Low complexity predominate over residues 257-268; it reads LEGPPAEEPAPG. 369 to 376 is a binding site for ATP; that stretch reads GPPGLGKT. Residues 856–889 form a disordered region; the sequence is ARSGPQVDQGSSGPASLWTDSGEKGTRQPAPRNH. Basic and acidic residues predominate over residues 876 to 889; that stretch reads SGEKGTRQPAPRNH.

Belongs to the activator 1 small subunits family. CTF18 subfamily. As to quaternary structure, component of the CTF18-RFC complex, which consists of CTF18, CTF8, DCC1, RFC2, RFC3, RFC4 and RFC5. During assembly of the CTF18-RFC complex, CTF18 may first assemble into a subcomplex with RFC2, RFC3, RFC4 and RFC5. CTF18 then interacts directly with CTF8, which in turn interacts with DCC1. The CTF18-RFC complex associates with PCNA and with DNA polymerase POLH. The CTF18-RFC complex does not interact with the Rad9/Rad1/Hus1 complex. CTF18 interacts with SMC1A and RAD21. Interacts with DDX11.

It localises to the nucleus. Chromosome cohesion factor involved in sister chromatid cohesion and fidelity of chromosome transmission. Component of one of the cell nuclear antigen loader complexes, CTF18-replication factor C (CTF18-RFC), which consists of CTF18, CTF8, DCC1, RFC2, RFC3, RFC4 and RFC5. The CTF18-RFC complex binds to single-stranded and primed DNAs and has weak ATPase activity that is stimulated by the presence of primed DNA, replication protein A (RPA) and by proliferating cell nuclear antigen (PCNA). The CTF18-RFC complex catalyzes the ATP-dependent loading of PCNA onto primed and gapped DNA. Interacts with and stimulates DNA polymerase POLH. During DNA repair synthesis, involved in loading DNA polymerase POLE at the sites of local damage. This Mus musculus (Mouse) protein is Chromosome transmission fidelity protein 18 homolog (Chtf18).